The primary structure comprises 182 residues: Glutathione-regulated potassium-efflux system ancillary protein KefG (182 aa).

The protein belongs to the NAD(P)H dehydrogenase (quinone) family. KefG subfamily. As to quaternary structure, interacts with KefB.

The protein resides in the cell inner membrane. It carries out the reaction a quinone + NADH + H(+) = a quinol + NAD(+). The catalysed reaction is a quinone + NADPH + H(+) = a quinol + NADP(+). Its function is as follows. Regulatory subunit of a potassium efflux system that confers protection against electrophiles. Required for full activity of KefB. This Yersinia pseudotuberculosis serotype O:1b (strain IP 31758) protein is Glutathione-regulated potassium-efflux system ancillary protein KefG.